A 236-amino-acid chain; its full sequence is 2-C-methyl-D-erythritol 4-phosphate cytidylyltransferase (236 aa).

This sequence belongs to the IspD/TarI cytidylyltransferase family. IspD subfamily. Homodimer.

It carries out the reaction 2-C-methyl-D-erythritol 4-phosphate + CTP + H(+) = 4-CDP-2-C-methyl-D-erythritol + diphosphate. It functions in the pathway isoprenoid biosynthesis; isopentenyl diphosphate biosynthesis via DXP pathway; isopentenyl diphosphate from 1-deoxy-D-xylulose 5-phosphate: step 2/6. Functionally, catalyzes the formation of 4-diphosphocytidyl-2-C-methyl-D-erythritol from CTP and 2-C-methyl-D-erythritol 4-phosphate (MEP). The chain is 2-C-methyl-D-erythritol 4-phosphate cytidylyltransferase from Shigella flexneri serotype 5b (strain 8401).